The following is a 364-amino-acid chain: Probable dual-specificity RNA methyltransferase RlmN (364 aa).

The Proton acceptor role is filled by Glu-106. The 239-residue stretch at 112–350 (YPQRNTVCIS…SCTVRDTRGR (239 aa)) folds into the Radical SAM core domain. Cys-119 and Cys-356 are disulfide-bonded. Residues Cys-126, Cys-130, and Cys-133 each contribute to the [4Fe-4S] cluster site. S-adenosyl-L-methionine contacts are provided by residues 177-178 (GE), Ser-211, 234-236 (SLH), and Asn-313. Cys-356 serves as the catalytic S-methylcysteine intermediate.

This sequence belongs to the radical SAM superfamily. RlmN family. [4Fe-4S] cluster serves as cofactor.

Its subcellular location is the cytoplasm. It catalyses the reaction adenosine(2503) in 23S rRNA + 2 reduced [2Fe-2S]-[ferredoxin] + 2 S-adenosyl-L-methionine = 2-methyladenosine(2503) in 23S rRNA + 5'-deoxyadenosine + L-methionine + 2 oxidized [2Fe-2S]-[ferredoxin] + S-adenosyl-L-homocysteine. The catalysed reaction is adenosine(37) in tRNA + 2 reduced [2Fe-2S]-[ferredoxin] + 2 S-adenosyl-L-methionine = 2-methyladenosine(37) in tRNA + 5'-deoxyadenosine + L-methionine + 2 oxidized [2Fe-2S]-[ferredoxin] + S-adenosyl-L-homocysteine. In terms of biological role, specifically methylates position 2 of adenine 2503 in 23S rRNA and position 2 of adenine 37 in tRNAs. In Mycobacterium ulcerans (strain Agy99), this protein is Probable dual-specificity RNA methyltransferase RlmN.